The chain runs to 230 residues: Flagellar L-ring protein (230 aa).

A signal peptide spans 1–22; that stretch reads MSPISNFARIALACTVAALLGG. Residue cysteine 23 is the site of N-palmitoyl cysteine attachment. The S-diacylglycerol cysteine moiety is linked to residue cysteine 23.

Belongs to the FlgH family. As to quaternary structure, the basal body constitutes a major portion of the flagellar organelle and consists of four rings (L,P,S, and M) mounted on a central rod.

The protein resides in the cell outer membrane. The protein localises to the bacterial flagellum basal body. Functionally, assembles around the rod to form the L-ring and probably protects the motor/basal body from shearing forces during rotation. The sequence is that of Flagellar L-ring protein from Stenotrophomonas maltophilia (strain K279a).